Here is a 1076-residue protein sequence, read N- to C-terminus: MESSMFKPSSMDLIRAGLQDLDRARALFGQLKADAIADGRCAELLGVLAHACDPDVALGNFVDIVNAMQSSRRDLDRVIPDAGALRRLITVLGASDAMGKFMRFRPELVEAASVGSADSHLFNRAQRRARLLMAVGADPDDQAMPVASKDLAEAATALRAGYRRQLAAIIAQDVMAEDPIRIQPTISSELSDLADAALEGALAIARHETEGNEHVRFTIIGMGKLGAQELNYVSDVDLIYVVEPADKDVDHQTLIRVGTKMGTMLQRVCQSVIMGVAEQPLWQIDGGLRPEGKDGALVRVLSSHKNYYEQWAENWEFQALLKARPVAGDPDLGQAYMDMSRPFVWSASKRKNFVYDCQKMRKRVEDLIPAPLKDREIKLGRGGLRDVEFTVQMLQLVHGRTDESLRTSNTLDSLQRLSEGGYVSRKQAVRMSQDYRFERVMEHRQQIWSLKRTHLFPDLGRASVGGLEKKRDIDVDELNQNQELRRLARAFGLHPEELVDKYDDTRREVRHLHLDIYYRPMLPVNAQMENDQIVLSVEAAQERFESIGFGDPDAAIRHVQALTAGVGRAAKINRIILPAVLQWLGEGQNPDMGLLNWRKLEENFGTESGYLGFLRDSTSAAQRLCHILSNSRFLGDALNKSVESISWLGDDGNLQARTREALDVQTGSALERFGSNINEFATSMRAMRRHEIERIGLSWMSGVISDSDSLKAMTDVYDAIIDASLTWAVRHQIAAFGVETAPAGITVIAMGRYGGREVNFSSDADAILIYRPADDADDGQANAFAKKVVEDLRNILQGPTTLEPKIELDLDLRPEGKNGPLVRSYASCEEYYESWASTWERQALLRARYAAGDAELARDFLINIADPLRYPTAELTEAELQNIRKLKARMEAERLPRGVRRERHLKLGKGGLSDVEWTVQLMQLQHAGDIKDLRVNGTLEALDVLEAKKLISAIDAIQLRKTWTLCTAARNGNYLWSGRANQADILPDDIYSLGGIAVYLGYGAHRGQHFENDLLAVMRKCRDVCQRLFYGQTEGEATAAATATASAATPQPQTAPRPRMHVIAPRLERNRRRAQR.

An adenylyl removase region spans residues 1–521; sequence MESSMFKPSS…LHLDIYYRPM (521 aa). The tract at residues 524-1076 is adenylyl transferase; the sequence is VNAQMENDQI…LERNRRRAQR (553 aa). Over residues 1041-1056 the composition is skewed to low complexity; the sequence is ATATASAATPQPQTAP. The tract at residues 1041–1076 is disordered; the sequence is ATATASAATPQPQTAPRPRMHVIAPRLERNRRRAQR.

It belongs to the GlnE family. Mg(2+) is required as a cofactor.

The enzyme catalyses [glutamine synthetase]-O(4)-(5'-adenylyl)-L-tyrosine + phosphate = [glutamine synthetase]-L-tyrosine + ADP. It catalyses the reaction [glutamine synthetase]-L-tyrosine + ATP = [glutamine synthetase]-O(4)-(5'-adenylyl)-L-tyrosine + diphosphate. Involved in the regulation of glutamine synthetase GlnA, a key enzyme in the process to assimilate ammonia. When cellular nitrogen levels are high, the C-terminal adenylyl transferase (AT) inactivates GlnA by covalent transfer of an adenylyl group from ATP to specific tyrosine residue of GlnA, thus reducing its activity. Conversely, when nitrogen levels are low, the N-terminal adenylyl removase (AR) activates GlnA by removing the adenylyl group by phosphorolysis, increasing its activity. The regulatory region of GlnE binds the signal transduction protein PII (GlnB) which indicates the nitrogen status of the cell. This chain is Bifunctional glutamine synthetase adenylyltransferase/adenylyl-removing enzyme, found in Bifidobacterium longum subsp. infantis (strain ATCC 15697 / DSM 20088 / JCM 1222 / NCTC 11817 / S12).